The primary structure comprises 604 residues: Glucose oxidase (604 aa).

The signal sequence occupies residues 1 to 18 (MKSTIITSILFSVATVQA). FAD-binding residues include Leu-52, Thr-53, and Glu-73. An N-linked (GlcNAc...) asparagine glycan is attached at Asn-111. 4 residues coordinate FAD: Ser-125, Asn-129, Gly-130, and Ser-132. Cys-186 and Cys-228 are oxidised to a cystine. The N-linked (GlcNAc...) asparagine glycan is linked to Asn-213. Val-272 is an FAD binding site. Asn-278, Asn-409, and Asn-531 each carry an N-linked (GlcNAc...) asparagine glycan. His-537 serves as the catalytic Proton acceptor. Residues Lys-558 and Val-559 each contribute to the O2 site. The FAD site is built by Gly-570 and Met-582.

This sequence belongs to the GMC oxidoreductase family. In terms of assembly, homodimer. FAD serves as cofactor.

The protein localises to the secreted. The protein resides in the cell wall. Its subcellular location is the cytoplasm. It is found in the extracellular space. It localises to the extracellular matrix. The catalysed reaction is beta-D-glucose + O2 = D-glucono-1,5-lactone + H2O2. In terms of biological role, glucose oxidase catalyzes the oxidation of beta-D-glucose to D-glucono-delta-lactone and hydrogen peroxide in the presence of molecular oxygen. The enzyme also catalyzes the reaction with D-xylose but at a much lower rate. Shows any activities against D-fructose, D-galactose and D-arabinose. The enzyme is cytotoxic for a series of bacteria, yeasts and filamentous fungi and acts primarily via the liberation of H(2)O(2), which is a harmful oxidative stress-generating agent. The polypeptide is Glucose oxidase (Penicillium chrysogenum (Penicillium notatum)).